We begin with the raw amino-acid sequence, 319 residues long: Ubiquinone biosynthesis protein COQ4, mitochondrial (319 aa).

A mitochondrion-targeting transit peptide spans 1-28 (MISRSIFSKSVSLQRSQNRSFLLTAASA). Positions 205, 206, 209, and 221 each coordinate Zn(2+).

Belongs to the COQ4 family. In terms of assembly, component of a multi-subunit COQ enzyme complex, composed of at least COQ3, COQ4, COQ5, COQ6, COQ7 and COQ9. It depends on Zn(2+) as a cofactor.

It is found in the mitochondrion inner membrane. It catalyses the reaction a 4-hydroxy-3-methoxy-5-(all-trans-polyprenyl)benzoate + H(+) = a 2-methoxy-6-(all-trans-polyprenyl)phenol + CO2. It functions in the pathway cofactor biosynthesis; ubiquinone biosynthesis. In terms of biological role, lyase that catalyzes the C1-decarboxylation of 4-hydroxy-3-methoxy-5-(all-trans-polyprenyl)benzoic acid into 2-methoxy-6-(all-trans-polyprenyl)phenol during ubiquinone biosynthesis. In Clavispora lusitaniae (strain ATCC 42720) (Yeast), this protein is Ubiquinone biosynthesis protein COQ4, mitochondrial.